Here is a 404-residue protein sequence, read N- to C-terminus: S-adenosylmethionine synthase (404 aa).

Residue H17 coordinates ATP. D19 is a binding site for Mg(2+). E45 provides a ligand contact to K(+). 2 residues coordinate L-methionine: E58 and Q101. Residues 101-111 (QSPDINRGVDR) form a flexible loop region. Residues 172–174 (DAK), 245–246 (RF), D254, 260–261 (RK), A277, and K281 each bind ATP. L-methionine is bound at residue D254. Residue K285 participates in L-methionine binding.

This sequence belongs to the AdoMet synthase family. Homotetramer; dimer of dimers. Requires Mg(2+) as cofactor. It depends on K(+) as a cofactor.

It localises to the cytoplasm. It catalyses the reaction L-methionine + ATP + H2O = S-adenosyl-L-methionine + phosphate + diphosphate. It functions in the pathway amino-acid biosynthesis; S-adenosyl-L-methionine biosynthesis; S-adenosyl-L-methionine from L-methionine: step 1/1. Its function is as follows. Catalyzes the formation of S-adenosylmethionine (AdoMet) from methionine and ATP. The overall synthetic reaction is composed of two sequential steps, AdoMet formation and the subsequent tripolyphosphate hydrolysis which occurs prior to release of AdoMet from the enzyme. The chain is S-adenosylmethionine synthase from Pelodictyon phaeoclathratiforme (strain DSM 5477 / BU-1).